Consider the following 102-residue polypeptide: Late embryogenesis abundant protein D-19 (102 aa).

The tract at residues 1-102 is disordered; that stretch reads MASEQYQAMR…IDESKFRTKN (102 aa). The segment covering 48-58 has biased composition (basic and acidic residues); sequence EGRHKGGETRK.

This sequence belongs to the small hydrophilic plant seed protein family.

In terms of biological role, LEA proteins are late embryonic proteins abundant in higher plant seed embryos. There are two subsets of LEA proteins (5a and 5b), the first ones are expressed when the cotyledon weight reach 80 mg and the second set are expressed above 100 mg. The function of those proteins is not known. This is Late embryogenesis abundant protein D-19 from Gossypium hirsutum (Upland cotton).